The primary structure comprises 473 residues: Photosystem II CP43 reaction center protein (473 aa).

A propeptide spanning residues 1 to 14 (MKTLYSLRRFYPVE) is cleaved from the precursor. At Thr15 the chain carries N-acetylthreonine. At Thr15 the chain carries Phosphothreonine. 5 helical membrane passes run 69–93 (LFEV…PHLA), 134–155 (LLGP…KDRN), 178–200 (KALS…RKIT), 255–275 (KPFA…LSYS), and 291–312 (WFNN…ASQA). A [CaMn4O5] cluster-binding site is contributed by Glu367. Residues 447–471 (RARAAAAGFEKGIDRDFEPVLSMTP) traverse the membrane as a helical segment.

This sequence belongs to the PsbB/PsbC family. PsbC subfamily. In terms of assembly, PSII is composed of 1 copy each of membrane proteins PsbA, PsbB, PsbC, PsbD, PsbE, PsbF, PsbH, PsbI, PsbJ, PsbK, PsbL, PsbM, PsbT, PsbX, PsbY, PsbZ, Psb30/Ycf12, at least 3 peripheral proteins of the oxygen-evolving complex and a large number of cofactors. It forms dimeric complexes. Binds multiple chlorophylls and provides some of the ligands for the Ca-4Mn-5O cluster of the oxygen-evolving complex. It may also provide a ligand for a Cl- that is required for oxygen evolution. PSII binds additional chlorophylls, carotenoids and specific lipids. is required as a cofactor.

It localises to the plastid. The protein localises to the chloroplast thylakoid membrane. One of the components of the core complex of photosystem II (PSII). It binds chlorophyll and helps catalyze the primary light-induced photochemical processes of PSII. PSII is a light-driven water:plastoquinone oxidoreductase, using light energy to abstract electrons from H(2)O, generating O(2) and a proton gradient subsequently used for ATP formation. This Pelargonium hortorum (Common geranium) protein is Photosystem II CP43 reaction center protein.